The following is a 276-amino-acid chain: MDTRYTHSPKDISHYSTEELRKEFLVEKVFVPNEVSLTYTHNDRMIFGGVTPTTESLEIILNKELGVDYFLERRELGVINIGGPGFIEIDGRKEAMKKQDGYYVGKETRQVIFSSEDAADPAKFYISSAPAHHKYPNVKISIDEIKPMETGEALTLNERKIYQYIHPNICESCQLQMGYTILEPGSSWNTMPCHTHERRMEAYVYFDMEEDTKIFHMMGDPAETKHLVMGNEQAVISPSWSIHSGVGTSNYSFIWAMCGENITYTDMDMVPMDELK.

Zn(2+)-binding residues include His194, His196, Glu201, and His243.

It belongs to the KduI family. It depends on Zn(2+) as a cofactor.

It catalyses the reaction 5-dehydro-4-deoxy-D-glucuronate = 3-deoxy-D-glycero-2,5-hexodiulosonate. It functions in the pathway glycan metabolism; pectin degradation; 2-dehydro-3-deoxy-D-gluconate from pectin: step 4/5. Functionally, catalyzes the isomerization of 5-dehydro-4-deoxy-D-glucuronate to 3-deoxy-D-glycero-2,5-hexodiulosonate. The protein is 4-deoxy-L-threo-5-hexosulose-uronate ketol-isomerase 2 (kduI2) of Enterococcus faecalis (strain ATCC 700802 / V583).